A 360-amino-acid polypeptide reads, in one-letter code: DNA polymerase IV (360 aa).

The UmuC domain maps to 6 to 187 (IIHVDMDAFY…LKIGDLHGVG (182 aa)). The Mg(2+) site is built by Asp-10 and Asp-105. Glu-106 is a catalytic residue.

It belongs to the DNA polymerase type-Y family. As to quaternary structure, monomer. Mg(2+) is required as a cofactor.

The protein resides in the cytoplasm. The enzyme catalyses DNA(n) + a 2'-deoxyribonucleoside 5'-triphosphate = DNA(n+1) + diphosphate. Its function is as follows. Poorly processive, error-prone DNA polymerase involved in untargeted mutagenesis. Copies undamaged DNA at stalled replication forks, which arise in vivo from mismatched or misaligned primer ends. These misaligned primers can be extended by PolIV. Exhibits no 3'-5' exonuclease (proofreading) activity. May be involved in translesional synthesis, in conjunction with the beta clamp from PolIII. The polypeptide is DNA polymerase IV (Exiguobacterium sibiricum (strain DSM 17290 / CCUG 55495 / CIP 109462 / JCM 13490 / 255-15)).